Consider the following 211-residue polypeptide: ATP-dependent Clp protease proteolytic subunit (211 aa).

The active-site Nucleophile is S114. H139 is an active-site residue.

The protein belongs to the peptidase S14 family. Fourteen ClpP subunits assemble into 2 heptameric rings which stack back to back to give a disk-like structure with a central cavity, resembling the structure of eukaryotic proteasomes.

It is found in the cytoplasm. It catalyses the reaction Hydrolysis of proteins to small peptides in the presence of ATP and magnesium. alpha-casein is the usual test substrate. In the absence of ATP, only oligopeptides shorter than five residues are hydrolyzed (such as succinyl-Leu-Tyr-|-NHMec, and Leu-Tyr-Leu-|-Tyr-Trp, in which cleavage of the -Tyr-|-Leu- and -Tyr-|-Trp bonds also occurs).. In terms of biological role, cleaves peptides in various proteins in a process that requires ATP hydrolysis. Has a chymotrypsin-like activity. Plays a major role in the degradation of misfolded proteins. In Pseudomonas fluorescens (strain ATCC BAA-477 / NRRL B-23932 / Pf-5), this protein is ATP-dependent Clp protease proteolytic subunit.